The primary structure comprises 960 residues: Semaphorin-6C (960 aa).

The first 23 residues, 1-23, serve as a signal peptide directing secretion; the sequence is MPRAPHSMPLLLLLLLSLPQAQT. The Extracellular segment spans residues 24–635; it reads AFPQDPIPLL…ASASRSIPIP (612 aa). The 487-residue stretch at 29 to 515 folds into the Sema domain; it reads PIPLLTSDLQ…FPGCIVYLSL (487 aa). N69 is a glycosylation site (N-linked (GlcNAc...) asparagine). 4 cysteine pairs are disulfide-bonded: C110–C120, C138–C147, C261–C372, and C286–C331. N285 is a glycosylation site (N-linked (GlcNAc...) asparagine). N-linked (GlcNAc...) asparagine glycosylation is present at N436. 4 disulfides stabilise this stretch: C478–C509, C518–C536, C524–C569, and C528–C544. The segment at 555–624 is disordered; the sequence is VDLTGNQESM…HTQGVRRDLS (70 aa). A helical membrane pass occupies residues 636 to 656; sequence LLLACVAAAFALGASVSGLLV. Residues 657–960 are Cytoplasmic-facing; it reads SCACRRANRR…PAPHGSHFNF (304 aa). 3 disordered regions span residues 685 to 725, 745 to 792, and 806 to 960; these read LARL…SPPE, ASGG…PGQE, and HGPQ…HFNF. A compositionally biased stretch (low complexity) spans 899-909; the sequence is RVPSGGPSRYS. Residues 922-935 are compositionally biased toward basic and acidic residues; sequence PDGHRGRSLKRVDV. Pro residues predominate over residues 940–952; the sequence is SPKPPLATPPQPA.

The protein belongs to the semaphorin family. Expressed in many regions of the developing nervous system, probably in neurons and their precursors, but also in nonneural tissue such as immature muscle and dermis. In adult, strong expression in the skeletal muscle and moderate expression in the brain, where cerebellum shows the highest expression. Also expressed in almost all areas of the CNS.

Its subcellular location is the cell membrane. Shows growth cone collapsing activity on dorsal root ganglion (DRG) neurons in vitro. May be a stop signal for the DRG neurons in their target areas, and possibly also for other neurons. May also be involved in the maintenance and remodeling of neuronal connections. The sequence is that of Semaphorin-6C (Sema6c) from Rattus norvegicus (Rat).